The sequence spans 542 residues: Pre-mRNA-splicing factor 38B (542 aa).

The segment covering 1–12 (MANNSPALTGNS) has biased composition (polar residues). Residues 1–41 (MANNSPALTGNSQPQHQAAAAVTQQQQQCGGGGGATKPAVS) are disordered. Residue Ala2 is modified to N-acetylalanine. Phosphoserine is present on Ser5. Residues 13 to 28 (QPQHQAAAAVTQQQQQ) are compositionally biased toward low complexity. Residue Lys228 is modified to N6-acetyllysine. The interval 233–542 (QIKTRPRKIK…KEHKSKDETV (310 aa)) is disordered. The segment covering 244–256 (DGKEGIEEIDRHV) has biased composition (basic and acidic residues). Over residues 257–285 (ERRRSRSPRRSLSPRRSPRRSRSRSHHRE) the composition is skewed to basic residues. A phosphoserine mark is found at Ser289, Ser291, Ser319, and Ser321. Residues 292–328 (FDRELEREKERQRLEREAKEREKERRRSRSIDRGLDR) show a composition bias toward basic and acidic residues. Residues 293-322 (DRELEREKERQRLEREAKEREKERRRSRSI) adopt a coiled-coil conformation. Basic residues predominate over residues 329-345 (RRSRSRERHRSRSRSRD). Over residues 346-419 (RKGDRRDRDR…DRRHRDDKKE (74 aa)) the composition is skewed to basic and acidic residues. Positions 420 to 447 (SKKKHSRSRSRERKHRSRSRNAGKRSRS) are enriched in basic residues. Position 445 is a phosphoserine (Ser445). The segment covering 448–465 (RSKDKSSRHKNESKEKAN) has biased composition (basic and acidic residues). Phosphoserine is present on residues Ser470, Ser472, and Ser478. 2 stretches are compositionally biased toward basic and acidic residues: residues 478–491 (SVEK…PSRE) and 498–520 (RSQD…RQDH). A phosphoserine mark is found at Ser523, Ser525, and Ser530. Positions 530–542 (SQEKEHKSKDETV) are enriched in basic and acidic residues.

This sequence belongs to the PRP38 family.

Its subcellular location is the nucleus. May be required for pre-mRNA splicing. The protein is Pre-mRNA-splicing factor 38B (Prpf38b) of Mus musculus (Mouse).